We begin with the raw amino-acid sequence, 556 residues long: Carotenoid-cleaving dioxygenase, mitochondrial (556 aa).

Fe cation-binding residues include His-203, His-263, His-334, and His-550.

This sequence belongs to the carotenoid oxygenase family. Fe(2+) serves as cofactor.

The protein resides in the mitochondrion. The enzyme catalyses all-trans-beta-carotene + O2 = beta-ionone + all-trans-10'-apo-beta-carotenal. The catalysed reaction is 5-cis-lycopene + O2 = 5-cis-10'-apo-lycopenal + (3E,5E)-6,10-dimethylundeca-3,5,9-trien-2-one. It catalyses the reaction 13-cis-lycopene + O2 = 13-cis-10'-apo-lycopenal + (3E,5E)-6,10-dimethylundeca-3,5,9-trien-2-one. It carries out the reaction lutein + O2 = (3R,6R)-hydroxy-alpha-ionone + (3R)-3-hydroxy-10'-apo-beta-carotenal. The enzyme catalyses lutein + O2 = (3R,6R)-3-hydroxy-10'-apo-alpha-carotenal + (3R)-hydroxy-beta-ionone. The catalysed reaction is all-trans-zeaxanthin + 2 O2 = 4,9-dimethyldodeca-2,4,6,8,10-pentaenedial + 2 (3R)-hydroxy-beta-ionone. It catalyses the reaction all-trans-zeaxanthin + O2 = (3R)-3-hydroxy-10'-apo-beta-carotenal + (3R)-hydroxy-beta-ionone. It carries out the reaction beta-cryptoxanthin + O2 = all-trans-10'-apo-beta-carotenal + (3R)-hydroxy-beta-ionone. The enzyme catalyses all-trans-10'-apo-beta-carotenal + O2 = beta-ionone + 4,9-dimethyldodeca-2,4,6,8,10-pentaenedial. The catalysed reaction is (3R)-3-hydroxy-10'-apo-beta-carotenal + O2 = 4,9-dimethyldodeca-2,4,6,8,10-pentaenedial + (3R)-hydroxy-beta-ionone. It catalyses the reaction (3R,6R)-3-hydroxy-10'-apo-alpha-carotenal + O2 = (3R,6R)-hydroxy-alpha-ionone + 4,9-dimethyldodeca-2,4,6,8,10-pentaenedial. Its function is as follows. Broad specificity mitochondrial dioxygenase that mediates the asymmetric oxidative cleavage of carotenoids. Cleaves carotenes (pure hydrocarbon carotenoids) such as all-trans-beta-carotene and lycopene as well as xanthophylls (oxygenated carotenoids) such as zeaxanthin, lutein and beta-cryptoxanthin at both the 9,10 and the 9',10' carbon-carbon double bond. Through its function in carotenoids metabolism regulates oxidative stress and the production of important signaling molecules. The protein is Carotenoid-cleaving dioxygenase, mitochondrial of Macaca fascicularis (Crab-eating macaque).